Here is a 320-residue protein sequence, read N- to C-terminus: Malate dehydrogenase (320 aa).

NAD(+) is bound by residues 10-15 and D34; that span reads GAGQIG. Residues R83 and R89 each contribute to the substrate site. NAD(+) contacts are provided by residues N96 and 119–121; that span reads ITN. Substrate is bound by residues N121 and R152. H176 functions as the Proton acceptor in the catalytic mechanism.

Belongs to the LDH/MDH superfamily. MDH type 3 family.

The catalysed reaction is (S)-malate + NAD(+) = oxaloacetate + NADH + H(+). Functionally, catalyzes the reversible oxidation of malate to oxaloacetate. In Jannaschia sp. (strain CCS1), this protein is Malate dehydrogenase.